The primary structure comprises 75 residues: UPF0352 protein ASA_2693 (75 aa).

It belongs to the UPF0352 family.

In Aeromonas salmonicida (strain A449), this protein is UPF0352 protein ASA_2693.